Consider the following 305-residue polypeptide: Cytochrome c biogenesis protein CcsA (305 aa).

The next 8 helical transmembrane spans lie at 4 to 24 (VLGL…LAFW), 32 to 52 (SGLV…QLVL), 58 to 78 (GHFP…ACTL), 91 to 111 (IVAA…SFAL), 136 to 156 (VIMV…AVLV), 212 to 232 (TITV…VWAN), 246 to 263 (TWAL…HTRL), and 275 to 295 (VASA…LLGI).

This sequence belongs to the CcmF/CycK/Ccl1/NrfE/CcsA family. As to quaternary structure, may interact with ccs1.

The protein localises to the cellular thylakoid membrane. In terms of biological role, required during biogenesis of c-type cytochromes (cytochrome c6 and cytochrome f) at the step of heme attachment. The polypeptide is Cytochrome c biogenesis protein CcsA (Synechococcus sp. (strain CC9311)).